The chain runs to 399 residues: Tryptophan synthase beta chain (399 aa).

Lysine 92 bears the N6-(pyridoxal phosphate)lysine mark.

It belongs to the TrpB family. Tetramer of two alpha and two beta chains. Pyridoxal 5'-phosphate is required as a cofactor.

It catalyses the reaction (1S,2R)-1-C-(indol-3-yl)glycerol 3-phosphate + L-serine = D-glyceraldehyde 3-phosphate + L-tryptophan + H2O. The protein operates within amino-acid biosynthesis; L-tryptophan biosynthesis; L-tryptophan from chorismate: step 5/5. In terms of biological role, the beta subunit is responsible for the synthesis of L-tryptophan from indole and L-serine. The sequence is that of Tryptophan synthase beta chain from Oceanobacillus iheyensis (strain DSM 14371 / CIP 107618 / JCM 11309 / KCTC 3954 / HTE831).